A 532-amino-acid polypeptide reads, in one-letter code: MGPLHGALLPPISVTVSLLILLLCAPGGRCGVVHTEKSMTAVLGTDVTMPCYYQAEAGEKVAQVVWLKKGANGQNMEIALLNTEYGANIFGAYEGRIKEKAPLDPADGGIVLRNAVQPDEGTYLCRVNTFPAGNFDAELELKVLVPPLPTLGPGPPLTEGEGKSLAASCTAEGNPAPTLTWETDVEGTNTTQKYEHPRSSSVTSEFYVVPTRRMNGKPLTCVVSHPGFQQEKRITHVLQVRYLAEVSVQGHEDGWFVGKEGATLQCQAGGNPAPKYEWSRLNGSLPAEVRMEGNTLQFLRALGAEDAGEYACRASNGIGTKSSTAIVSIAEHQATKIDLVSVSLGSVGILTAVLLVVLVITLLLVNRHHKRQTKQLSEKIEELSTLSREASRRRLNSTTASTDTRLQLEEAMHLRSGMHCDSLRDPSISSMMGEEADRRSYSTLTTLKETETQTELLSTVPDEEVKEDGEEPEQVEQSLEKEPNPTEPDGMVGVANQPFIKQGMAHFYQENGTLRAKPSANGIYINGRGHLV.

The N-terminal stretch at 1–30 (MGPLHGALLPPISVTVSLLILLLCAPGGRC) is a signal peptide. Residues 31-142 (GVVHTEKSMT…GNFDAELELK (112 aa)) form the Ig-like V-type domain. Topologically, residues 31 to 344 (GVVHTEKSMT…TKIDLVSVSL (314 aa)) are extracellular. 3 disulfide bridges follow: Cys51–Cys125, Cys169–Cys221, and Cys266–Cys312. Ig-like C2-type domains are found at residues 146–235 (PPLP…KRIT) and 244–328 (AEVS…AIVS). Positions 152–179 (GPGPPLTEGEGKSLAASCTAEGNPAPTL) are disordered. Residues Asn189 and Asn282 are each glycosylated (N-linked (GlcNAc...) asparagine). Residues 345–365 (GSVGILTAVLLVVLVITLLLV) form a helical membrane-spanning segment. The Cytoplasmic portion of the chain corresponds to 366 to 532 (NRHHKRQTKQ…IYINGRGHLV (167 aa)). Positions 453 to 491 (QTELLSTVPDEEVKEDGEEPEQVEQSLEKEPNPTEPDGM) are disordered. Acidic residues predominate over residues 461-474 (PDEEVKEDGEEPEQ).

The protein belongs to the nectin family.

It is found in the cell membrane. In terms of biological role, may be involved in cell adhesion. The protein is Nectin-4 of Xenopus tropicalis (Western clawed frog).